The primary structure comprises 106 residues: Nucleoid-associated protein BBta_7345 (106 aa).

It belongs to the YbaB/EbfC family. As to quaternary structure, homodimer.

It localises to the cytoplasm. It is found in the nucleoid. Its function is as follows. Binds to DNA and alters its conformation. May be involved in regulation of gene expression, nucleoid organization and DNA protection. In Bradyrhizobium sp. (strain BTAi1 / ATCC BAA-1182), this protein is Nucleoid-associated protein BBta_7345.